Here is a 56-residue protein sequence, read N- to C-terminus: UPF0391 membrane protein Bd1438 (56 aa).

A run of 2 helical transmembrane segments spans residues Ala4–Ala24 and Ile33–Gly53.

The protein belongs to the UPF0391 family.

It is found in the cell membrane. This chain is UPF0391 membrane protein Bd1438, found in Bdellovibrio bacteriovorus (strain ATCC 15356 / DSM 50701 / NCIMB 9529 / HD100).